The chain runs to 287 residues: ATP synthase gamma chain (287 aa).

It belongs to the ATPase gamma chain family. F-type ATPases have 2 components, CF(1) - the catalytic core - and CF(0) - the membrane proton channel. CF(1) has five subunits: alpha(3), beta(3), gamma(1), delta(1), epsilon(1). CF(0) has three main subunits: a, b and c.

Its subcellular location is the cell inner membrane. In terms of biological role, produces ATP from ADP in the presence of a proton gradient across the membrane. The gamma chain is believed to be important in regulating ATPase activity and the flow of protons through the CF(0) complex. The sequence is that of ATP synthase gamma chain from Xanthomonas axonopodis pv. citri (strain 306).